The primary structure comprises 214 residues: 3-isopropylmalate dehydratase small subunit (214 aa).

Belongs to the LeuD family. LeuD type 1 subfamily. As to quaternary structure, heterodimer of LeuC and LeuD.

It catalyses the reaction (2R,3S)-3-isopropylmalate = (2S)-2-isopropylmalate. The protein operates within amino-acid biosynthesis; L-leucine biosynthesis; L-leucine from 3-methyl-2-oxobutanoate: step 2/4. Functionally, catalyzes the isomerization between 2-isopropylmalate and 3-isopropylmalate, via the formation of 2-isopropylmaleate. This is 3-isopropylmalate dehydratase small subunit from Desulforapulum autotrophicum (strain ATCC 43914 / DSM 3382 / VKM B-1955 / HRM2) (Desulfobacterium autotrophicum).